Reading from the N-terminus, the 346-residue chain is Anthranilate phosphoribosyltransferase (346 aa).

Residues glycine 88, glycine 91–aspartate 92, threonine 96, asparagine 98–threonine 101, lysine 116–serine 124, and alanine 128 contribute to the 5-phospho-alpha-D-ribose 1-diphosphate site. Anthranilate is bound at residue glycine 88. Serine 100 serves as a coordination point for Mg(2+). Residue asparagine 119 coordinates anthranilate. Residue arginine 174 participates in anthranilate binding. 2 residues coordinate Mg(2+): aspartate 233 and glutamate 234.

Belongs to the anthranilate phosphoribosyltransferase family. As to quaternary structure, homodimer. Requires Mg(2+) as cofactor.

The catalysed reaction is N-(5-phospho-beta-D-ribosyl)anthranilate + diphosphate = 5-phospho-alpha-D-ribose 1-diphosphate + anthranilate. The protein operates within amino-acid biosynthesis; L-tryptophan biosynthesis; L-tryptophan from chorismate: step 2/5. Functionally, catalyzes the transfer of the phosphoribosyl group of 5-phosphorylribose-1-pyrophosphate (PRPP) to anthranilate to yield N-(5'-phosphoribosyl)-anthranilate (PRA). In Paramagnetospirillum magneticum (strain ATCC 700264 / AMB-1) (Magnetospirillum magneticum), this protein is Anthranilate phosphoribosyltransferase.